The following is a 443-amino-acid chain: Zinc finger protein 713 (443 aa).

Positions 1 to 10 (MPSQNAVFSQ) are enriched in polar residues. Disordered stretches follow at residues 1 to 23 (MPSQ…NDGS) and 99 to 118 (DTHP…TSQN). The 71-residue stretch at 32–102 (LTFQDVAVDF…ERDSLLDTHP (71 aa)) folds into the KRAB domain. A compositionally biased stretch (basic and acidic residues) spans 99-112 (DTHPDGENRPEIKK). The C2H2-type 1; degenerate zinc finger occupies 255–280 (HTAEKPSECGKAFSHTSSLSQPQMLL). 5 C2H2-type zinc fingers span residues 286–308 (YKCD…QRIH), 314–336 (FICN…LRIH), 342–364 (YKCN…HRLH), 370–392 (YECG…ERTH), and 398–420 (YKCN…RKIH).

This sequence belongs to the krueppel C2H2-type zinc-finger protein family. In terms of tissue distribution, expressed in fetal and adult brain.

Its subcellular location is the nucleus. Its function is as follows. May be involved in transcriptional regulation. The chain is Zinc finger protein 713 from Homo sapiens (Human).